The following is a 296-amino-acid chain: Nitrogenase iron protein (296 aa).

10-17 (GKGGIGKS) serves as a coordination point for ATP. Cys-98 provides a ligand contact to [4Fe-4S] cluster. ADP-ribosylarginine; by dinitrogenase reductase ADP-ribosyltransferase is present on Arg-101. Cys-133 provides a ligand contact to [4Fe-4S] cluster.

This sequence belongs to the NifH/BchL/ChlL family. Homodimer. It depends on [4Fe-4S] cluster as a cofactor. The reversible ADP-ribosylation of Arg-101 inactivates the nitrogenase reductase and regulates nitrogenase activity.

The catalysed reaction is N2 + 8 reduced [2Fe-2S]-[ferredoxin] + 16 ATP + 16 H2O = H2 + 8 oxidized [2Fe-2S]-[ferredoxin] + 2 NH4(+) + 16 ADP + 16 phosphate + 6 H(+). The key enzymatic reactions in nitrogen fixation are catalyzed by the nitrogenase complex, which has 2 components: the iron protein and the molybdenum-iron protein. The chain is Nitrogenase iron protein from Magnetococcus marinus (strain ATCC BAA-1437 / JCM 17883 / MC-1).